The following is a 598-amino-acid chain: MAESMQGLHRSHRCTEVSNANIGEKVTVMGWVQKRRNLGSLIFVDLRDRSGILQIVFGEENVGAEGFEKAGTLRSEFVIAVEGTVQKRTAAVNESLKTGDIEVIATSIRVLSEAQTPPFHIEENSKTSEDIRLKYRYLDLRRPDIQRNLMLRSNVLRVMRDFMANEGFLEIETPILCKSTPEGARDYLVPSRIHHGHFYALPQSPQLFKQLLMASGYDRYFQIARCFRDEDLRADRQPEFTQADMELSFVDIDDVIEVNERLLKHLFKEVINVDVEIPFKRMPWQEAMDRFGSDKPDTRFGMELCDVSEVVKDCGFGVFTGALENGGSVRGINVEGQAKMPRKKIDKLVEHAKGCGAKGLAYLCINEDGTYKSSFAKFMTEAELDALVAKMNGKPGDLLLFAADKNKIVWNVLGALRLMLGAELGLIDENKYNFLWVTEFPLLEWSDEENRFMAMHHPFTMPMEEDWDKIDSDPGAVRAKAYDIVLNGTELGGGSVRIHQDDIQEKMFEVLGFTKERAHEQFGFLLDAFSYGVPPHAGLAFGVDRICMHMLHTDNIKEVIAFPKVKDASDLMSEAPGTVDPKQLEELGIAVAAEEDEE.

Position 182 (glutamate 182) interacts with L-aspartate. Residues 206-209 are aspartate; sequence QLFK. L-aspartate is bound at residue arginine 228. ATP is bound by residues 228–230 and glutamine 237; that span reads RDE. Histidine 456 contacts L-aspartate. Residue glutamate 490 coordinates ATP. Arginine 497 is an L-aspartate binding site. 542 to 545 is a binding site for ATP; the sequence is GVDR.

This sequence belongs to the class-II aminoacyl-tRNA synthetase family. Type 1 subfamily. As to quaternary structure, homodimer.

The protein resides in the cytoplasm. It catalyses the reaction tRNA(Asp) + L-aspartate + ATP = L-aspartyl-tRNA(Asp) + AMP + diphosphate. In terms of biological role, catalyzes the attachment of L-aspartate to tRNA(Asp) in a two-step reaction: L-aspartate is first activated by ATP to form Asp-AMP and then transferred to the acceptor end of tRNA(Asp). The sequence is that of Aspartate--tRNA ligase from Agathobacter rectalis (strain ATCC 33656 / DSM 3377 / JCM 17463 / KCTC 5835 / VPI 0990) (Eubacterium rectale).